A 97-amino-acid polypeptide reads, in one-letter code: UPF0235 protein Daro_3887 (97 aa).

Belongs to the UPF0235 family.

The polypeptide is UPF0235 protein Daro_3887 (Dechloromonas aromatica (strain RCB)).